We begin with the raw amino-acid sequence, 308 residues long: Acetyl-coenzyme A carboxylase carboxyl transferase subunit beta 1 (308 aa).

One can recognise a CoA carboxyltransferase N-terminal domain in the interval 25–294; sequence VWTKCTSCEQ…PMVVSVNESP (270 aa). Zn(2+) contacts are provided by C29, C32, C48, and C51. Residues 29–51 form a C4-type zinc finger; that stretch reads CTSCEQVLYHAELERNLEVCPKC. Residues 289–308 form a disordered region; that stretch reads SVNESPNEEPYSVPEADEKG.

This sequence belongs to the AccD/PCCB family. In terms of assembly, acetyl-CoA carboxylase is a heterohexamer composed of biotin carboxyl carrier protein (AccB), biotin carboxylase (AccC) and two subunits each of ACCase subunit alpha (AccA) and ACCase subunit beta (AccD). Requires Zn(2+) as cofactor.

It localises to the cytoplasm. The catalysed reaction is N(6)-carboxybiotinyl-L-lysyl-[protein] + acetyl-CoA = N(6)-biotinyl-L-lysyl-[protein] + malonyl-CoA. The protein operates within lipid metabolism; malonyl-CoA biosynthesis; malonyl-CoA from acetyl-CoA: step 1/1. Functionally, component of the acetyl coenzyme A carboxylase (ACC) complex. Biotin carboxylase (BC) catalyzes the carboxylation of biotin on its carrier protein (BCCP) and then the CO(2) group is transferred by the transcarboxylase to acetyl-CoA to form malonyl-CoA. The chain is Acetyl-coenzyme A carboxylase carboxyl transferase subunit beta 1 from Vibrio campbellii (strain ATCC BAA-1116).